The primary structure comprises 337 residues: Holliday junction branch migration complex subunit RuvB (337 aa).

Residues 1–27 (MIEADRLVHAQPQGTEERDEQIDRAMR) form a disordered region. The segment at 4–187 (ADRLVHAQPQ…FGIPLRLEFY (184 aa)) is large ATPase domain (RuvB-L). ATP-binding positions include arginine 27, glycine 68, lysine 71, threonine 72, threonine 73, 134 to 136 (EDY), arginine 177, tyrosine 187, and arginine 224. Threonine 72 serves as a coordination point for Mg(2+). Residues 188-258 (NVKDLSSIVT…VAESALDMLD (71 aa)) are small ATPAse domain (RuvB-S). The segment at 261–337 (VEGFDYMDRK…YQHFNLIQPE (77 aa)) is head domain (RuvB-H). Positions 297, 316, and 321 each coordinate DNA.

This sequence belongs to the RuvB family. As to quaternary structure, homohexamer. Forms an RuvA(8)-RuvB(12)-Holliday junction (HJ) complex. HJ DNA is sandwiched between 2 RuvA tetramers; dsDNA enters through RuvA and exits via RuvB. An RuvB hexamer assembles on each DNA strand where it exits the tetramer. Each RuvB hexamer is contacted by two RuvA subunits (via domain III) on 2 adjacent RuvB subunits; this complex drives branch migration. In the full resolvosome a probable DNA-RuvA(4)-RuvB(12)-RuvC(2) complex forms which resolves the HJ.

It is found in the cytoplasm. It catalyses the reaction ATP + H2O = ADP + phosphate + H(+). In terms of biological role, the RuvA-RuvB-RuvC complex processes Holliday junction (HJ) DNA during genetic recombination and DNA repair, while the RuvA-RuvB complex plays an important role in the rescue of blocked DNA replication forks via replication fork reversal (RFR). RuvA specifically binds to HJ cruciform DNA, conferring on it an open structure. The RuvB hexamer acts as an ATP-dependent pump, pulling dsDNA into and through the RuvAB complex. RuvB forms 2 homohexamers on either side of HJ DNA bound by 1 or 2 RuvA tetramers; 4 subunits per hexamer contact DNA at a time. Coordinated motions by a converter formed by DNA-disengaged RuvB subunits stimulates ATP hydrolysis and nucleotide exchange. Immobilization of the converter enables RuvB to convert the ATP-contained energy into a lever motion, pulling 2 nucleotides of DNA out of the RuvA tetramer per ATP hydrolyzed, thus driving DNA branch migration. The RuvB motors rotate together with the DNA substrate, which together with the progressing nucleotide cycle form the mechanistic basis for DNA recombination by continuous HJ branch migration. Branch migration allows RuvC to scan DNA until it finds its consensus sequence, where it cleaves and resolves cruciform DNA. This Shewanella loihica (strain ATCC BAA-1088 / PV-4) protein is Holliday junction branch migration complex subunit RuvB.